The sequence spans 367 residues: Zinc metalloproteinase nas-22 (367 aa).

Positions 1–16 are cleaved as a signal peptide; it reads MKSFFILLSILQECYG. A Peptidase M12A domain is found at 41–237; the sequence is VLIRGSDEER…LMINKYYECS (197 aa). N-linked (GlcNAc...) asparagine glycans are attached at residues asparagine 56 and asparagine 85. Intrachain disulfides connect cysteine 88–cysteine 236, cysteine 111–cysteine 130, cysteine 238–cysteine 258, and cysteine 260–cysteine 269. Residue histidine 138 participates in Zn(2+) binding. The active site involves glutamate 139. Positions 142 and 148 each coordinate Zn(2+). 3 N-linked (GlcNAc...) asparagine glycosylation sites follow: asparagine 169, asparagine 241, and asparagine 254. In terms of domain architecture, EGF-like spans 232 to 270; it reads KYYECSCANNLSCKNHGYPNPSNCSQCNCPYGFGGADCS. N-linked (GlcNAc...) asparagine glycosylation is found at asparagine 287 and asparagine 322.

Zn(2+) serves as cofactor. As to expression, expressed in uterine seam (utse) cell.

The protein localises to the secreted. In terms of biological role, metalloprotease. This chain is Zinc metalloproteinase nas-22 (nas-22), found in Caenorhabditis elegans.